Reading from the N-terminus, the 151-residue chain is Ubiquitin-conjugating enzyme E2 W (151 aa).

M1 participates in a covalent cross-link: Peptide (Met-Gly) (interchain with G-Cter in ubiquitin). In terms of domain architecture, UBC core spans 3–151 (SMQKRLQKEL…TKWWYHDDTC (149 aa)). C91 (glycyl thioester intermediate) is an active-site residue.

The protein belongs to the ubiquitin-conjugating enzyme family. Homodimer. Interacts with FANCL. Interacts with STUB1/CHIP. In terms of processing, autoubiquitinated at Met-1.

It localises to the nucleus. It catalyses the reaction S-ubiquitinyl-[E1 ubiquitin-activating enzyme]-L-cysteine + [E2 ubiquitin-conjugating enzyme]-L-cysteine = [E1 ubiquitin-activating enzyme]-L-cysteine + S-ubiquitinyl-[E2 ubiquitin-conjugating enzyme]-L-cysteine.. The enzyme catalyses S-ubiquitinyl-[E1 ubiquitin-activating enzyme]-L-cysteine + [acceptor protein]-N-terminal-amino acid = [E1 ubiquitin-activating enzyme]-L-cysteine + N-terminal-ubiquitinyl-[acceptor protein].. It participates in protein modification; protein ubiquitination. In terms of biological role, accepts ubiquitin from the E1 complex and catalyzes its covalent attachment to other proteins. Specifically monoubiquitinates the N-terminus of various substrates, including ATXN3, MAPT/TAU, POLR2H/RPB8 and STUB1/CHIP, by recognizing backbone atoms of disordered N-termini. Involved in degradation of misfolded chaperone substrates by mediating monoubiquitination of STUB1/CHIP, leading to recruitment of ATXN3 to monoubiquitinated STUB1/CHIP, and restriction of the length of ubiquitin chain attached to STUB1/CHIP substrates by ATXN3. After UV irradiation, but not after mitomycin-C (MMC) treatment, acts as a specific E2 ubiquitin-conjugating enzyme for the Fanconi anemia complex by associating with E3 ubiquitin-protein ligase FANCL and catalyzing monoubiquitination of FANCD2, a key step in the DNA damage pathway. In vitro catalyzes 'Lys-11'-linked polyubiquitination. UBE2W-catalyzed ubiquitination also occurs in the presence of inactive RING/U-box type E3s, i.e. lacking the active site cysteine residues to form thioester bonds with ubiquitin, or even in the absence of E3, albeit at a slower rate. The polypeptide is Ubiquitin-conjugating enzyme E2 W (Ube2w) (Mus musculus (Mouse)).